Here is a 252-residue protein sequence, read N- to C-terminus: 2-succinyl-6-hydroxy-2,4-cyclohexadiene-1-carboxylate synthase (252 aa).

This sequence belongs to the AB hydrolase superfamily. MenH family. Monomer.

The enzyme catalyses 5-enolpyruvoyl-6-hydroxy-2-succinyl-cyclohex-3-ene-1-carboxylate = (1R,6R)-6-hydroxy-2-succinyl-cyclohexa-2,4-diene-1-carboxylate + pyruvate. It functions in the pathway quinol/quinone metabolism; 1,4-dihydroxy-2-naphthoate biosynthesis; 1,4-dihydroxy-2-naphthoate from chorismate: step 3/7. It participates in quinol/quinone metabolism; menaquinone biosynthesis. Functionally, catalyzes a proton abstraction reaction that results in 2,5-elimination of pyruvate from 2-succinyl-5-enolpyruvyl-6-hydroxy-3-cyclohexene-1-carboxylate (SEPHCHC) and the formation of 2-succinyl-6-hydroxy-2,4-cyclohexadiene-1-carboxylate (SHCHC). This chain is 2-succinyl-6-hydroxy-2,4-cyclohexadiene-1-carboxylate synthase, found in Salmonella typhi.